An 85-amino-acid polypeptide reads, in one-letter code: ATP synthase subunit c (85 aa).

2 consecutive transmembrane segments (helical) span residues 20–40 (LGAG…GNIF) and 65–85 (FALT…ILFA).

The protein belongs to the ATPase C chain family. F-type ATPases have 2 components, F(1) - the catalytic core - and F(0) - the membrane proton channel. F(1) has five subunits: alpha(3), beta(3), gamma(1), delta(1), epsilon(1). F(0) has three main subunits: a(1), b(2) and c(10-14). The alpha and beta chains form an alternating ring which encloses part of the gamma chain. F(1) is attached to F(0) by a central stalk formed by the gamma and epsilon chains, while a peripheral stalk is formed by the delta and b chains.

The protein resides in the cell inner membrane. In terms of biological role, f(1)F(0) ATP synthase produces ATP from ADP in the presence of a proton or sodium gradient. F-type ATPases consist of two structural domains, F(1) containing the extramembraneous catalytic core and F(0) containing the membrane proton channel, linked together by a central stalk and a peripheral stalk. During catalysis, ATP synthesis in the catalytic domain of F(1) is coupled via a rotary mechanism of the central stalk subunits to proton translocation. Key component of the F(0) channel; it plays a direct role in translocation across the membrane. A homomeric c-ring of between 10-14 subunits forms the central stalk rotor element with the F(1) delta and epsilon subunits. This chain is ATP synthase subunit c, found in Gluconobacter oxydans (strain 621H) (Gluconobacter suboxydans).